The primary structure comprises 397 residues: MTVSRLRPYATTVFAEMSALATRIGAVNLGQGFPDEDGPPKMLQAAQDAIAGGVNQYPPGPGSAPLRRAIAAQRRRHFGVDYDPETEVLVTVGATEAIAAAVLGLVEPGSEVLLIEPFYDSYSPVVAMAGAHRVTVPLVPDGRGFALDADALRRAVTPRTRALIINSPHNPTGAVLSATELAAIAEIAVAANLVVITDEVYEHLVFDHARHLPLAGFDGMAERTITISSAAKMFNCTGWKIGWACGPAELIAGVRAAKQYLSYVGGAPFQPAVALALDTEDAWVAALRNSLRARRDRLAAGLTEIGFAVHDSYGTYFLCADPRPLGYDDSTEFCAALPEKVGVAAIPMSAFCDPAAGQASQQADVWNHLVRFTFCKRDDTLDEAIRRLSVLAERPAT.

Residues Gly109 to Ser110 and Asp218 to Glu222 each bind pyridoxal 5'-phosphate. N6-(pyridoxal phosphate)lysine is present on Lys232.

The protein belongs to the class-III pyridoxal-phosphate-dependent aminotransferase family. In terms of assembly, homodimer. It depends on pyridoxal 5'-phosphate as a cofactor.

The protein resides in the cytoplasm. The enzyme catalyses N-succinyl-(2S,6S)-2,6-diaminopimelate + 2-oxoglutarate = (S)-2-succinylamino-6-oxoheptanedioate + L-glutamate. It participates in amino-acid biosynthesis; L-lysine biosynthesis via DAP pathway; LL-2,6-diaminopimelate from (S)-tetrahydrodipicolinate (succinylase route): step 2/3. Functionally, involved in the lysine biosynthetic pathways. It catalyzes the transfer of an amino group from L-glutamate to N-succinyl-2-l-amino-6-oxoheptanedioate (N-succinyl-2-l-amino-6-ketopimelate) in a PLP-dependent reaction, yielding as products N-succinyl-l-2,6-diaminoheptanedioate (N-succinyl-diaminopimelate) and 2-oxoglutarate. The protein is Probable N-succinyldiaminopimelate aminotransferase DapC (dapC) of Mycobacterium tuberculosis (strain CDC 1551 / Oshkosh).